The chain runs to 338 residues: Mas-related G-protein coupled receptor member B2 (338 aa).

The Extracellular portion of the chain corresponds to 1-40 (MSGDFLIKNLSTSAWKTNITVLNGSYYIDTSVCVTRNQAM). N-linked (GlcNAc...) asparagine glycans are attached at residues Asn-9, Asn-18, and Asn-23. The chain crosses the membrane as a helical span at residues 41 to 61 (ILLSIIISLVGMGLNAIVLWF). Residues 62-89 (LGIRMHTNAFTVYILNLAMADFLYLCSQ) lie on the Cytoplasmic side of the membrane. The chain crosses the membrane as a helical span at residues 90–110 (FVICLLIAFYIFYSIDINIPL). A topological domain (extracellular) is located at residue Val-111. The helical transmembrane segment at 112-132 (LYVVPIFAYLSGLSILSTISI) threads the bilayer. The Cytoplasmic segment spans residues 133-157 (ERCLSVIWPIWYRCKRPRHTSAITC). A helical membrane pass occupies residues 158–178 (FVLWVMSLLLGLLEGKACGLL). The Extracellular segment spans residues 179–191 (FNSFDSYWCETFD). Residues 192 to 212 (VITNIWSVVFFGVLCGSSLTL) traverse the membrane as a helical segment. The Cytoplasmic portion of the chain corresponds to 213-231 (LVRIFCGSQRIPMTRLYVT). Residues 232–252 (ITLTVLVFLIFGLPFGIYWIL) form a helical membrane-spanning segment. Residues 253–268 (YQWISNFYYVEICNFY) lie on the Extracellular side of the membrane. Residues 269–289 (LEILFLSCVNSCMNPIIYFLV) form a helical membrane-spanning segment. Residues 290 to 338 (GSIRHRRFRRKTLKLLLQRAMQDTPEEEQSGNKSSSEHPEELETVQSCS) lie on the Cytoplasmic side of the membrane. The interval 310 to 338 (MQDTPEEEQSGNKSSSEHPEELETVQSCS) is disordered.

The protein belongs to the G-protein coupled receptor 1 family. Mas subfamily. In terms of tissue distribution, mast cell-specific.

It is found in the cell membrane. Mast cell-specific receptor for basic secretagogues, i.e. cationic amphiphilic drugs, as well as endo- or exogenous peptides, consisting of a basic head group and a hydrophobic core. Recognizes and binds small molecules containing a cyclized tetrahydroisoquinoline (THIQ), such as non-steroidal neuromuscular blocking drugs (NMBDs), including tubocurarine and atracurium. In response to these compounds, mediates pseudo-allergic reactions characterized by histamine release, inflammation and airway contraction. This chain is Mas-related G-protein coupled receptor member B2 (Mrgprb2), found in Mus musculus (Mouse).